We begin with the raw amino-acid sequence, 511 residues long: Phospho-2-dehydro-3-deoxyheptonate aldolase 1, chloroplastic (511 aa).

A chloroplast-targeting transit peptide spans 1-49; sequence MALSNTLSLSSSKSLVQSHLLHNPTPQPRFSLFPTTQHGRRHPISAVHA.

It belongs to the class-II DAHP synthase family. In terms of tissue distribution, higher levels seen in the cotyledons than in the leaves and flowers. Lower levels seen in the roots and stems.

It is found in the plastid. The protein resides in the chloroplast. It carries out the reaction D-erythrose 4-phosphate + phosphoenolpyruvate + H2O = 7-phospho-2-dehydro-3-deoxy-D-arabino-heptonate + phosphate. It participates in metabolic intermediate biosynthesis; chorismate biosynthesis; chorismate from D-erythrose 4-phosphate and phosphoenolpyruvate: step 1/7. Its function is as follows. May be involved in the synthesis of secondary metabolites derived from intermediates of the pre-chorismate pathway up to shikimate. The protein is Phospho-2-dehydro-3-deoxyheptonate aldolase 1, chloroplastic of Solanum lycopersicum (Tomato).